We begin with the raw amino-acid sequence, 321 residues long: Methyltransferase cfoB (321 aa).

Belongs to the methyltransferase superfamily.

The protein operates within secondary metabolite biosynthesis; flavonoid biosynthesis. In terms of biological role, methyltransferase; part of the gene cluster that mediates the biosynthesis of chlorflavonin, a fungal flavonoid with acetolactate synthase inhibitory activity. Within the pathway, cfoB is responsible for the methylation at position C7-OH of flavonoid. The pathway begins with the PKS-NRPS hybrid synthetase cfoA that uses benzoic acid or p-hydroxybenzoic acid as a starter unit with four rounds of chain elongation using malonyl-CoA to form the chalcone skeleton. Then, a new type of chalcone isomerase, cfoK, catalyzes the conversion of the chalcone into a flavanone by a histidine-mediated oxa-Michael addition mechanism. The desaturation of flavanone to flavone is catalyzed by a new type of flavone synthase, the flavin mononucleotide (FMN)-dependent oxidoreductase cfoJ. Monooxygenases cfoF, cfoG, and P450 cfoH are responsible for the hydroxylation of the flavonoid skeleton at sites C3, C8, and C2', respectively. Like cfoF, the dehydratase cfoI also plays a role in the hydroxylation of position C3. Methyltransferases cfoB, cfoC, and cfoD then catalyze the methylation of C7-OH, C8-OH, and C3-OH, respectively. Finally, the monooxygenase cfoE is responsible for the chlorination of flavonoid at position C3'. In Aspergillus candidus, this protein is Methyltransferase cfoB.